The following is a 528-amino-acid chain: MAAVLNAERLEVSVDGLTLSPDPEERPGAEGAPLLPPPLPPPSPPGSGRGPGASGEQPEPGEAAAGGAAEEARRLEQRWGFGLEELYGLALRFFKEKDGKAFHPTYEEKLKLVALHKQVLMGPYNPDTCPEVGFFDVLGNDRRREWAALGNMSKEDAMVEFVKLLNRCCHLFSTYVASHKIEKEEQEKKRKEEEERRRREEEERERLQKEEEKRRREEEERLRREEEERRRIEEERLRLEQQKQQIMAALNSQTAVQFQQYAAQQYPGNYEQQQILIRQLQEQHYQQYMQQLYQVQLAQQQAALQKQQEVVVAGSSLPTSSKVNATVPSNMMSVNGQAKTHTDSSEKELEPEAAEEALENGPKESLPVIAAPSMWTRPQIKDFKEKIQQDADSVITVGRGEVVTVRVPTHEEGSYLFWEFATDNYDIGFGVYFEWTDSPNTAVSVHVSESSDDDEEEEENIGCEEKAKKNANKPLLDEIVPVYRRDCHEEVYAGSHQYPGRGVYLLKFDNSYSLWRSKSVYYRVYYTR.

The interval 1 to 71 (MAAVLNAERL…EAAAGGAAEE (71 aa)) is disordered. Ala-2 bears the N-acetylalanine; in Golgi resident protein GCP60, N-terminally processed mark. At Ser-13 the chain carries Phosphoserine. Residue Thr-18 is modified to Phosphothreonine. Residues Ser-20, Ser-43, and Ser-47 each carry the phosphoserine modification. The segment covering 34–45 (LLPPPLPPPSPP) has biased composition (pro residues). Over residues 54 to 69 (SGEQPEPGEAAAGGAA) the composition is skewed to low complexity. The region spanning 83–174 (LEELYGLALR…LNRCCHLFST (92 aa)) is the ACB domain. The stretch at 174 to 257 (TYVASHKIEK…AALNSQTAVQ (84 aa)) forms a coiled coil. The disordered stretch occupies residues 182–230 (EKEEQEKKRKEEEERRRREEEERERLQKEEEKRRREEEERLRREEEERR). A charged amino-acid region (CAR) region spans residues 182-240 (EKEEQEKKRKEEEERRRREEEERERLQKEEEKRRREEEERLRREEEERRRIEEERLRLE). A q domain; Interaction with PI4KB, TBC1D22A and TBC1D22B region spans residues 241–308 (QQKQQIMAAL…QQQAALQKQQ (68 aa)). The tract at residues 335 to 362 (NGQAKTHTDSSEKELEPEAAEEALENGP) is disordered. Over residues 340–350 (THTDSSEKELE) the composition is skewed to basic and acidic residues. Positions 384–526 (KEKIQQDADS…SKSVYYRVYY (143 aa)) constitute a GOLD domain. The membrane-binding stretch occupies residues 514–516 (LWR).

Homodimer. Interacts with the C-terminal cytoplasmic domain of giantin/GOLGB1. Interacts with PBR and PKA regulatory subunit RI-alpha. Does not interact with PKA regulatory subunit RI-beta nor PKA regulatory subunit RII-alpha. Interacts (via Q domain) with PI4KB (via N-terminus). Interacts (via Q domain) with TBC1D22A and TBC1D22B; interactions with PI4KB and with TBC1D22A and TBC1D22B are mutually exclusive. Interacts with C10ORF76 and RAB11B. As to quaternary structure, (Microbial infection) Interacts (via GOLD domain) with 3A proteins from various picornaviruses, including poliovirus, enterovirus A71, enterovirus D68, hepatitis A virus, human parechovirus 1, poliovirus, Human rhinovirus-14 (Hrv-14), coysackievirus B2, coysackievirus B3, coysackievirus B5, Aichi virus and human klassevirus. Interacts (via GOLD domain) with Aichi virus protein 3A; this interaction allows the formation of a 3A/ACBD3/PI4KB complex in order to synthesize PI4P at the viral RNA replication sites. Interacts with Aichi virus protein 2B. Interacts with Aichi virus protein 2C. As to expression, ubiquitous, with highest expression in testis and ovary.

The protein localises to the golgi apparatus membrane. The protein resides in the mitochondrion. Its function is as follows. Involved in the maintenance of Golgi structure by interacting with giantin, affecting protein transport between the endoplasmic reticulum and Golgi. Involved in hormone-induced steroid biosynthesis in testicular Leydig cells. Recruits PI4KB to the Golgi apparatus membrane; enhances the enzyme activity of PI4KB activity via its membrane recruitment thereby increasing the local concentration of the substrate in the vicinity of the kinase. In terms of biological role, (Microbial infection) Plays an essential role in Aichi virus RNA replication by recruiting PI4KB at the viral replication sites. The polypeptide is Golgi resident protein GCP60 (ACBD3) (Homo sapiens (Human)).